We begin with the raw amino-acid sequence, 190 residues long: Ribosome hibernation promotion factor (190 aa).

The tract at residues 101–190 (RDRGDQEVFV…KYGLIQTSEQ (90 aa)) is required for ribosome-binding.

The protein belongs to the HPF/YfiA ribosome-associated protein family. Long HPF subfamily. As to quaternary structure, interacts with 100S ribosomes during exponential growth, as 100S ribosomes decrease (after 28 hours) also found associated with 30s and 50S subunits.

The protein localises to the cytoplasm. In terms of biological role, required and sufficient for dimerization of active 70S ribosomes into 100S ribosomes. 110S ribosomes are probably translationally inactive and may serve as a reservoir of easily reactivated ribosomes when necessary in the cell. Also reduces the translation efficiency of a small number of genes. Unlike E.coli, 100S ribosomes are present during exponential growth and decrease during stationary phase. This strain produces 30% fewer 100S ribosomes than strain N315 and RN4200 under the same growth conditions. The protein is Ribosome hibernation promotion factor of Staphylococcus aureus (strain USA300).